We begin with the raw amino-acid sequence, 150 residues long: uncharacterized protein (150 aa).

3 consecutive transmembrane segments (helical) span residues 50–70, 80–100, and 127–147; these read VVSVILTLRGYVQLGYMVIHL, LYITITHYTIYIVNIVIQLWL, and KVVIRFYFHFYFFFSFLFFIE.

The protein resides in the membrane. This is an uncharacterized protein from Schizosaccharomyces pombe (strain 972 / ATCC 24843) (Fission yeast).